Consider the following 360-residue polypeptide: UDP-N-acetylglucosamine--N-acetylmuramyl-(pentapeptide) pyrophosphoryl-undecaprenol N-acetylglucosamine transferase (360 aa).

Residues Ser-198 and Gln-289 each coordinate UDP-N-acetyl-alpha-D-glucosamine.

It belongs to the glycosyltransferase 28 family. MurG subfamily.

It localises to the cell membrane. The enzyme catalyses Mur2Ac(oyl-L-Ala-gamma-D-Glu-L-Lys-D-Ala-D-Ala)-di-trans,octa-cis-undecaprenyl diphosphate + UDP-N-acetyl-alpha-D-glucosamine = beta-D-GlcNAc-(1-&gt;4)-Mur2Ac(oyl-L-Ala-gamma-D-Glu-L-Lys-D-Ala-D-Ala)-di-trans,octa-cis-undecaprenyl diphosphate + UDP + H(+). The protein operates within cell wall biogenesis; peptidoglycan biosynthesis. Functionally, cell wall formation. Catalyzes the transfer of a GlcNAc subunit on undecaprenyl-pyrophosphoryl-MurNAc-pentapeptide (lipid intermediate I) to form undecaprenyl-pyrophosphoryl-MurNAc-(pentapeptide)GlcNAc (lipid intermediate II). This Streptococcus pyogenes serotype M6 (strain ATCC BAA-946 / MGAS10394) protein is UDP-N-acetylglucosamine--N-acetylmuramyl-(pentapeptide) pyrophosphoryl-undecaprenol N-acetylglucosamine transferase.